The following is a 201-amino-acid chain: Recombination protein RecR (201 aa).

Residues 57-72 form a C4-type zinc finger; that stretch reads CKYCSNFGNKDECDIC. One can recognise a Toprim domain in the interval 80–176; it reads TKLMIVTTNE…QIYRIGFGIP (97 aa).

The protein belongs to the RecR family.

May play a role in DNA repair. It seems to be involved in an RecBC-independent recombinational process of DNA repair. It may act with RecF and RecO. This Ureaplasma urealyticum serovar 10 (strain ATCC 33699 / Western) protein is Recombination protein RecR.